The following is a 312-amino-acid chain: Pre-mRNA-splicing factor 38A (312 aa).

The tract at residues 1-179 is N-terminal protein interaction domain; sequence MANRTVKDAH…VLEEAEQLEP (179 aa). S11, S193, S194, S209, and S226 each carry phosphoserine. Positions 170-204 form a coiled coil; sequence VLEEAEQLEPRVSALEEDMDDVESSEEEEEEDEKL. The segment at 181 to 312 is disordered; the sequence is VSALEEDMDD…SHKKSRRGNE (132 aa). Residues 184–202 are compositionally biased toward acidic residues; that stretch reads LEEDMDDVESSEEEEEEDE. Basic and acidic residues predominate over residues 203–224; the sequence is KLERVPSPDHRRRSYRDLDKPR. 2 stretches are compositionally biased toward basic residues: residues 225–294 and 301–312; these read RSPA…RSHS and KKSHKKSRRGNE.

This sequence belongs to the PRP38 family. Component of the spliceosome B complex. Interacts (via N-terminal interaction domain) with ZMAT2 and MFAP1.

It localises to the nucleus. Its function is as follows. Involved in pre-mRNA splicing as a component of the spliceosome. The sequence is that of Pre-mRNA-splicing factor 38A (Prpf38a) from Mus musculus (Mouse).